A 99-amino-acid polypeptide reads, in one-letter code: Large ribosomal subunit protein bL27 (99 aa).

Positions 1–9 (MLIMNLQLF) are excised as a propeptide.

The protein belongs to the bacterial ribosomal protein bL27 family. Post-translationally, the N-terminus is cleaved by ribosomal processing cysteine protease Prp.

The polypeptide is Large ribosomal subunit protein bL27 (Clostridium botulinum (strain Alaska E43 / Type E3)).